The chain runs to 709 residues: Nucleobase-ascorbate transporter 11 (709 aa).

Disordered stretches follow at residues 1–28 (MDSGSGFDPDTGNNKGNGSGGGNGYGER) and 58–167 (TGFV…SEDG). Residues 15–25 (KGNGSGGGNGY) are compositionally biased toward gly residues. Over residues 65–74 (SGETSTSTRT) the composition is skewed to polar residues. 3 stretches are compositionally biased toward basic and acidic residues: residues 75 to 89 (KFGESSDFDLPKGRD), 108 to 132 (NRPEIEHVTGSEPVSREEEERRLNR), and 142 to 151 (EGGKINKDLE). The next 12 helical transmembrane spans lie at 196–216 (YLSLVGSLVFIPLVIVPAMDG), 222–242 (ASVISTMLLLTGVTTILHCYF), 246–266 (LPLVQGSSFVYLAPVLVVINS), 288–308 (IIVGSLFQCILGFSGLMSLLL), 310–330 (FINPVVVAPTVAAVGLAFFSY), 336–356 (GTCVEISVPLILLLLIFTLYL), 369–389 (IYAVPLSALLIWTYAFFLTVG), 454–474 (IIMIFVSLVASVDSVGTYHSA), 532–552 (LVIGAMFLIVLSFLGKLGAIL), 555–575 (IPQALAASVLCFIWALTVSLG), 590–610 (ITIVGVSLFLGLSIPAYFQQY), and 642–662 (FAMNAVLSLNMVVTFLLAFIL).

It belongs to the nucleobase:cation symporter-2 (NCS2) (TC 2.A.40) family. In terms of tissue distribution, expressed in leaf primordia and vasculature of pedicels, rosette leaves, sepals, carpels and siliques. Expressed in the root central cylinder.

The protein localises to the membrane. The sequence is that of Nucleobase-ascorbate transporter 11 (NAT11) from Arabidopsis thaliana (Mouse-ear cress).